We begin with the raw amino-acid sequence, 637 residues long: Sec1 family domain-containing protein 1 (637 aa).

3 positions are modified to phosphoserine: Ser32, Ser298, and Ser523.

This sequence belongs to the STXBP/unc-18/SEC1 family. In terms of assembly, interacts with STX17. Interacts with the COG complex via COG4. Interacts with STX5A. In terms of tissue distribution, highly expressed in testis. Detected at lower levels in brain, astrocytes, heart and small intestine.

It localises to the cytoplasm. The protein localises to the endoplasmic reticulum membrane. The protein resides in the golgi apparatus. Its subcellular location is the golgi stack membrane. In terms of biological role, plays a role in SNARE-pin assembly and Golgi-to-ER retrograde transport via its interaction with COG4. Involved in vesicular transport between the endoplasmic reticulum and the Golgi. In Rattus norvegicus (Rat), this protein is Sec1 family domain-containing protein 1 (Scfd1).